The chain runs to 743 residues: 1,4-alpha-glucan branching enzyme GlgB (743 aa).

D416 functions as the Nucleophile in the catalytic mechanism. The active-site Proton donor is the E469.

Belongs to the glycosyl hydrolase 13 family. GlgB subfamily. As to quaternary structure, monomer.

It carries out the reaction Transfers a segment of a (1-&gt;4)-alpha-D-glucan chain to a primary hydroxy group in a similar glucan chain.. The protein operates within glycan biosynthesis; glycogen biosynthesis. Its function is as follows. Catalyzes the formation of the alpha-1,6-glucosidic linkages in glycogen by scission of a 1,4-alpha-linked oligosaccharide from growing alpha-1,4-glucan chains and the subsequent attachment of the oligosaccharide to the alpha-1,6 position. The chain is 1,4-alpha-glucan branching enzyme GlgB from Shewanella baltica (strain OS195).